The following is a 468-amino-acid chain: Ribulose bisphosphate carboxylase large chain (468 aa).

K4 is modified (N6,N6,N6-trimethyllysine). Substrate contacts are provided by N113 and T163. Residue K165 is the Proton acceptor of the active site. K167 is a binding site for substrate. 3 residues coordinate Mg(2+): K191, D193, and E194. Residue K191 is modified to N6-carboxylysine. Residue H284 is the Proton acceptor of the active site. Substrate-binding residues include R285, H317, and S369.

It belongs to the RuBisCO large chain family. Type I subfamily. Heterohexadecamer of 8 large chains and 8 small chains; disulfide-linked. The disulfide link is formed within the large subunit homodimers. It depends on Mg(2+) as a cofactor. In terms of processing, the disulfide bond which can form in the large chain dimeric partners within the hexadecamer appears to be associated with oxidative stress and protein turnover.

It is found in the plastid. It localises to the chloroplast. It carries out the reaction 2 (2R)-3-phosphoglycerate + 2 H(+) = D-ribulose 1,5-bisphosphate + CO2 + H2O. The catalysed reaction is D-ribulose 1,5-bisphosphate + O2 = 2-phosphoglycolate + (2R)-3-phosphoglycerate + 2 H(+). In terms of biological role, ruBisCO catalyzes two reactions: the carboxylation of D-ribulose 1,5-bisphosphate, the primary event in carbon dioxide fixation, as well as the oxidative fragmentation of the pentose substrate in the photorespiration process. Both reactions occur simultaneously and in competition at the same active site. The polypeptide is Ribulose bisphosphate carboxylase large chain (Pandorea jasminoides (Bower vine)).